Consider the following 197-residue polypeptide: Imidazoleglycerol-phosphate dehydratase (197 aa).

The protein belongs to the imidazoleglycerol-phosphate dehydratase family.

The protein resides in the cytoplasm. It catalyses the reaction D-erythro-1-(imidazol-4-yl)glycerol 3-phosphate = 3-(imidazol-4-yl)-2-oxopropyl phosphate + H2O. It functions in the pathway amino-acid biosynthesis; L-histidine biosynthesis; L-histidine from 5-phospho-alpha-D-ribose 1-diphosphate: step 6/9. This chain is Imidazoleglycerol-phosphate dehydratase, found in Bradyrhizobium sp. (strain ORS 278).